The primary structure comprises 352 residues: Zinc finger CCCH domain-containing protein 42 (352 aa).

An RRM domain is found at 36–114; that stretch reads AYVYVGGIPF…RTIKVDHCGA (79 aa). 2 consecutive C3H1-type zinc fingers follow at residues 130 to 157 and 180 to 207; these read REAR…HDEK and REGR…HDEK. The disordered stretch occupies residues 156–179; sequence EKRAANTGWGHEEDRSSKWDHDKN. Basic and acidic residues-rich tracts occupy residues 210–230, 243–296, and 304–352; these read ATTG…DKLN, GDFK…RSGR, and RHND…DRRR. The segment at 210–352 is disordered; it reads ATTGWGHEED…DSLRREDRRR (143 aa). A coiled-coil region spans residues 319–348; the sequence is RAQDWEKRKAESRRDRNDREEKDRDSLRRE.

The sequence is that of Zinc finger CCCH domain-containing protein 42 from Arabidopsis thaliana (Mouse-ear cress).